A 365-amino-acid polypeptide reads, in one-letter code: Adenosine deaminase (365 aa).

Residues His-19 and His-21 each contribute to the Zn(2+) site. Residues His-21, Asp-23, and Gly-181 each coordinate substrate. His-208 lines the Zn(2+) pocket. The Proton donor role is filled by Glu-211. Asp-300 is a Zn(2+) binding site.

Belongs to the metallo-dependent hydrolases superfamily. Adenosine and AMP deaminases family. Adenosine deaminase subfamily. It depends on Zn(2+) as a cofactor.

The enzyme catalyses adenosine + H2O + H(+) = inosine + NH4(+). It catalyses the reaction 2'-deoxyadenosine + H2O + H(+) = 2'-deoxyinosine + NH4(+). Its function is as follows. Catalyzes the hydrolytic deamination of adenosine and 2-deoxyadenosine. In Mycobacterium tuberculosis (strain ATCC 25177 / H37Ra), this protein is Adenosine deaminase.